The following is a 199-amino-acid chain: Proteasome subunit beta type-2 (199 aa).

The protein belongs to the peptidase T1B family. The 26S proteasome consists of a 20S proteasome core and two 19S regulatory subunits. The 20S proteasome core is composed of 28 subunits that are arranged in four stacked rings, resulting in a barrel-shaped structure. The two end rings are each formed by seven alpha subunits, and the two central rings are each formed by seven beta subunits. The catalytic chamber with the active sites is on the inside of the barrel.

It is found in the cytoplasm. The protein localises to the nucleus. Functionally, non-catalytic component of the proteasome, a multicatalytic proteinase complex which is characterized by its ability to cleave peptides with Arg, Phe, Tyr, Leu, and Glu adjacent to the leaving group at neutral or slightly basic pH. The proteasome has an ATP-dependent proteolytic activity. The chain is Proteasome subunit beta type-2 (pbs-4) from Caenorhabditis elegans.